The sequence spans 594 residues: Dictomallein-4 (594 aa).

Positions 1-18 (MKLVLIFLIINFLLIINC) are cleaved as a signal peptide. The 262-residue stretch at 147–408 (PDVSQDYTLK…QNYFKNSIYY (262 aa)) folds into the Peptidase M66 domain. Residue histidine 300 coordinates Zn(2+). Glutamate 301 is an active-site residue. Zn(2+)-binding residues include histidine 304 and histidine 310.

Belongs to the dictomallein family. It depends on Zn(2+) as a cofactor.

It localises to the secreted. In Dictyostelium discoideum (Social amoeba), this protein is Dictomallein-4 (dtmlD).